The sequence spans 268 residues: Peptide transport system ATP-binding protein SapF (268 aa).

An ABC transporter domain is found at 6 to 251 (LEVRNLSKTF…PLHELTRRLI (246 aa)). 47–54 (GENGSGKS) contributes to the ATP binding site.

Belongs to the ABC transporter superfamily.

It localises to the cell inner membrane. Functionally, involved in a peptide intake transport system that plays a role in the resistance to antimicrobial peptides. This Salmonella typhimurium (strain LT2 / SGSC1412 / ATCC 700720) protein is Peptide transport system ATP-binding protein SapF.